Here is a 216-residue protein sequence, read N- to C-terminus: Ribose-5-phosphate isomerase A (216 aa).

Substrate is bound by residues 26 to 29, 79 to 82, and 92 to 95; these read TGST, DGAD, and KGGG. The Proton acceptor role is filled by E101. K119 provides a ligand contact to substrate.

The protein belongs to the ribose 5-phosphate isomerase family. In terms of assembly, homodimer.

It catalyses the reaction aldehydo-D-ribose 5-phosphate = D-ribulose 5-phosphate. The protein operates within carbohydrate degradation; pentose phosphate pathway; D-ribose 5-phosphate from D-ribulose 5-phosphate (non-oxidative stage): step 1/1. In terms of biological role, catalyzes the reversible conversion of ribose-5-phosphate to ribulose 5-phosphate. The sequence is that of Ribose-5-phosphate isomerase A from Legionella pneumophila (strain Corby).